Reading from the N-terminus, the 312-residue chain is MQRGRRKPDWLKSRPPSGSRFTEIKERLRERDLHTVCEEANCPNMGECWSGRDGPGTATFMLMGDRCSRGCNFCDVETGGMKSLDSDEPENVADAVAEIGLDYVVLTSVDRDDLADGGSEHFAETIREIQRRDPEILVETLIPDFQGDPEAIDRIIDAGPDVIAHNVETVERLQWPVRDRRADYEQSLAVLDRVGRESDIHTKTSLMLGVGEYDHEVYRTLGDLSEVGVDVVTFGQYLQPSRSHLDVFEYVHPDVFETWRAVAEREFDFLYCASGPMVRSSYKAGELFVEALLREGRSPEDARRHARAAGGD.

Positions 37, 42, 48, 67, 71, 74, and 281 each coordinate [4Fe-4S] cluster. The Radical SAM core domain maps to 52–270 (RDGPGTATFM…AVAEREFDFL (219 aa)).

This sequence belongs to the radical SAM superfamily. Lipoyl synthase family. It depends on [4Fe-4S] cluster as a cofactor.

The protein localises to the cytoplasm. The enzyme catalyses [[Fe-S] cluster scaffold protein carrying a second [4Fe-4S](2+) cluster] + N(6)-octanoyl-L-lysyl-[protein] + 2 oxidized [2Fe-2S]-[ferredoxin] + 2 S-adenosyl-L-methionine + 4 H(+) = [[Fe-S] cluster scaffold protein] + N(6)-[(R)-dihydrolipoyl]-L-lysyl-[protein] + 4 Fe(3+) + 2 hydrogen sulfide + 2 5'-deoxyadenosine + 2 L-methionine + 2 reduced [2Fe-2S]-[ferredoxin]. It participates in protein modification; protein lipoylation via endogenous pathway; protein N(6)-(lipoyl)lysine from octanoyl-[acyl-carrier-protein]: step 2/2. Its function is as follows. Catalyzes the radical-mediated insertion of two sulfur atoms into the C-6 and C-8 positions of the octanoyl moiety bound to the lipoyl domains of lipoate-dependent enzymes, thereby converting the octanoylated domains into lipoylated derivatives. In Halorubrum lacusprofundi (strain ATCC 49239 / DSM 5036 / JCM 8891 / ACAM 34), this protein is Lipoyl synthase.